The sequence spans 93 residues: Pyrimidine/purine nucleoside phosphorylase (93 aa).

The protein belongs to the nucleoside phosphorylase PpnP family.

The catalysed reaction is a purine D-ribonucleoside + phosphate = a purine nucleobase + alpha-D-ribose 1-phosphate. It carries out the reaction adenosine + phosphate = alpha-D-ribose 1-phosphate + adenine. It catalyses the reaction cytidine + phosphate = cytosine + alpha-D-ribose 1-phosphate. The enzyme catalyses guanosine + phosphate = alpha-D-ribose 1-phosphate + guanine. The catalysed reaction is inosine + phosphate = alpha-D-ribose 1-phosphate + hypoxanthine. It carries out the reaction thymidine + phosphate = 2-deoxy-alpha-D-ribose 1-phosphate + thymine. It catalyses the reaction uridine + phosphate = alpha-D-ribose 1-phosphate + uracil. The enzyme catalyses xanthosine + phosphate = alpha-D-ribose 1-phosphate + xanthine. Catalyzes the phosphorolysis of diverse nucleosides, yielding D-ribose 1-phosphate and the respective free bases. Can use uridine, adenosine, guanosine, cytidine, thymidine, inosine and xanthosine as substrates. Also catalyzes the reverse reactions. This is Pyrimidine/purine nucleoside phosphorylase from Shewanella halifaxensis (strain HAW-EB4).